We begin with the raw amino-acid sequence, 194 residues long: Flagellar transcriptional regulator FlhC (194 aa).

Zn(2+)-binding residues include Cys139, Cys142, Cys159, and Cys162.

This sequence belongs to the FlhC family. In terms of assembly, heterohexamer composed of two FlhC and four FlhD subunits. Each FlhC binds a FlhD dimer, forming a heterotrimer, and a hexamer assembles by dimerization of two heterotrimers. Zn(2+) serves as cofactor.

The protein resides in the cytoplasm. In terms of biological role, functions in complex with FlhD as a master transcriptional regulator that regulates transcription of several flagellar and non-flagellar operons by binding to their promoter region. Activates expression of class 2 flagellar genes, including fliA, which is a flagellum-specific sigma factor that turns on the class 3 genes. Also regulates genes whose products function in a variety of physiological pathways. This is Flagellar transcriptional regulator FlhC from Serratia marcescens.